Here is a 223-residue protein sequence, read N- to C-terminus: Ras-related protein Rab-37 (223 aa).

The interval 1 to 23 (MTGTPGAVATRDGEAPERSPPCS) is disordered. Thr-2 carries the N-acetylthreonine modification. GTP is bound by residues Thr-38, Gly-39, Val-40, Gly-41, Lys-42, Thr-43, Cys-44, and Thr-62. Position 43 (Thr-43) interacts with Mg(2+). 2 short sequence motifs (switch) span residues 52-67 (GAFLSGTFIATVGIDF) and 85-102 (DTAGQERFRSVTHAYYRD). Mg(2+) contacts are provided by Thr-62 and Asp-85. Residues Gly-88, Asn-143, Lys-144, Asp-146, Met-147, Ser-173, Ala-174, and Lys-175 each contribute to the GTP site. S-geranylgeranyl cysteine attachment occurs at residues Cys-219 and Cys-220. At Cys-220 the chain carries Cysteine methyl ester. A propeptide spans 221–223 (SFM) (removed in mature form).

Belongs to the small GTPase superfamily. Rab family. As to quaternary structure, interacts with RIMS1. Interacts (in GDP-bound form) with RPGR, RPGR functions as guanine exchange factor (GEF). Requires Mg(2+) as cofactor.

The protein localises to the cytoplasmic vesicle. The protein resides in the cell projection. Its subcellular location is the cilium. The catalysed reaction is GTP + H2O = GDP + phosphate + H(+). Its activity is regulated as follows. Regulated by guanine nucleotide exchange factors (GEFs) including RPGR which promote the exchange of bound GDP for free GTP. Regulated by GTPase activating proteins (GAPs) which increase the GTP hydrolysis activity. Inhibited by GDP dissociation inhibitors (GDIs). Its function is as follows. The small GTPases Rab are key regulators of intracellular membrane trafficking, from the formation of transport vesicles to their fusion with membranes. Rabs cycle between an inactive GDP-bound form and an active GTP-bound form that is able to recruit to membranes different sets of downstream effectors directly responsible for vesicle formation, movement, tethering and fusion. Acts as an organizer for autophagosome biogenesis in a GTP-dependent manner. Involved in retinal homeostasis by autophagy regulation. This Homo sapiens (Human) protein is Ras-related protein Rab-37.